Reading from the N-terminus, the 245-residue chain is Cuticle protein (245 aa).

The Chitin-binding type R&amp;R domain occupies 25–86 (VSYAAAPALV…TGDSKSQQES (62 aa)). The tract at residues 79 to 100 (DSKSQQESRSGDVVQGSYSVVD) is disordered. A run of 3 repeats spans residues 92-95 (VQGS), 108-111 (VDYT), and 118-121 (FNAV).

In terms of biological role, component of the cuticle of African malaria mosquito. The protein is Cuticle protein (Ccp84Ab) of Anopheles gambiae (African malaria mosquito).